The following is a 400-amino-acid chain: DNA primase large subunit PriL (400 aa).

The [4Fe-4S] cluster site is built by cysteine 247, cysteine 356, cysteine 367, and cysteine 373.

The protein belongs to the eukaryotic-type primase large subunit family. As to quaternary structure, heterodimer of a small subunit (PriS) and a large subunit (PriL). It depends on [4Fe-4S] cluster as a cofactor.

In terms of biological role, regulatory subunit of DNA primase, an RNA polymerase that catalyzes the synthesis of short RNA molecules used as primers for DNA polymerase during DNA replication. Stabilizes and modulates the activity of the small subunit, increasing the rate of DNA synthesis, and conferring RNA synthesis capability. The DNA polymerase activity may enable DNA primase to also catalyze primer extension after primer synthesis. May also play a role in DNA repair. This chain is DNA primase large subunit PriL, found in Thermococcus kodakarensis (strain ATCC BAA-918 / JCM 12380 / KOD1) (Pyrococcus kodakaraensis (strain KOD1)).